A 249-amino-acid polypeptide reads, in one-letter code: Capsid protein (249 aa).

The disordered stretch occupies residues 1–33; sequence MDTDGDNDVFGSGNDTRNNDDKKKEEMKQNISD. The span at 17–28 shows a compositional bias: basic and acidic residues; it reads RNNDDKKKEEMK.

The protein belongs to the closteroviridae capsid protein family.

Its subcellular location is the virion. Functionally, capsid protein self-assembles to form filamentous capsids, about 650-850 nm in length. The chain is Capsid protein from Beta vulgaris (Sugar beet).